The primary structure comprises 346 residues: Inositol 2-dehydrogenase/D-chiro-inositol 3-dehydrogenase (346 aa).

Positions 322 to 331 (GREESIELPK) are enriched in basic and acidic residues. A disordered region spans residues 322-346 (GREESIELPKKPAFYQHSAATPEQV).

The protein belongs to the Gfo/Idh/MocA family. As to quaternary structure, homotetramer.

It carries out the reaction myo-inositol + NAD(+) = scyllo-inosose + NADH + H(+). The catalysed reaction is 1D-chiro-inositol + NAD(+) = scyllo-inosine + NADH + H(+). Its pathway is polyol metabolism; myo-inositol degradation into acetyl-CoA; acetyl-CoA from myo-inositol: step 1/7. Involved in the oxidation of myo-inositol (MI) and D-chiro-inositol (DCI) to 2-keto-myo-inositol (2KMI or 2-inosose) and 1-keto-D-chiro-inositol (1KDCI), respectively. This Shouchella clausii (strain KSM-K16) (Alkalihalobacillus clausii) protein is Inositol 2-dehydrogenase/D-chiro-inositol 3-dehydrogenase.